Reading from the N-terminus, the 209-residue chain is BAG family molecular chaperone regulator 1 (209 aa).

One can recognise a Ubiquitin-like domain in the interval 7 to 84; sequence CSSVQTIVDI…IIVMGGKNAM (78 aa). A BAG domain is found at 107 to 193; that stretch reads TYDVNLKDVA…TLLNQNDALL (87 aa).

As to quaternary structure, homodimer or homotetramer.

In terms of biological role, may inhibit the chaperone activity of HSP70/HSC70 by promoting substrate release in an ATP-dependent manner. This is BAG family molecular chaperone regulator 1 (bag-1) from Caenorhabditis briggsae.